Here is a 296-residue protein sequence, read N- to C-terminus: Cytidine deaminase (296 aa).

CMP/dCMP-type deaminase domains are found at residues 47–167 and 186–296; these read TEAE…FGPK and DSSD…VDPV. A substrate-binding site is contributed by 88-90; sequence NLE. H101 serves as a coordination point for Zn(2+). E103 serves as the catalytic Proton donor. C128 and C131 together coordinate Zn(2+).

Belongs to the cytidine and deoxycytidylate deaminase family. As to quaternary structure, homodimer. The cofactor is Zn(2+).

The catalysed reaction is cytidine + H2O + H(+) = uridine + NH4(+). The enzyme catalyses 2'-deoxycytidine + H2O + H(+) = 2'-deoxyuridine + NH4(+). Functionally, this enzyme scavenges exogenous and endogenous cytidine and 2'-deoxycytidine for UMP synthesis. The sequence is that of Cytidine deaminase from Shewanella sp. (strain ANA-3).